A 169-amino-acid chain; its full sequence is Disulfide bond formation protein B (169 aa).

At 1–13 (MSQLQQFCHNRFS) the chain is on the cytoplasmic side. Residues 14–30 (WGLLLLSAIGLELAALF) traverse the membrane as a helical segment. Topologically, residues 31 to 48 (FQYGMDLAPCVMCIYIRV) are periplasmic. A disulfide bridge links cysteine 40 with cysteine 43. Residues 49–64 (AVLGIILAALIGILQP) form a helical membrane-spanning segment. Topologically, residues 65–71 (KVWLLRL) are cytoplasmic. Residues 72–89 (VGMAGWAVSAVWGFKLAY) traverse the membrane as a helical segment. The Periplasmic portion of the chain corresponds to 90–144 (ELNQMQVNPSPFATCSFYPEFPSFMPLDTWLPSVFSPTGMCSDSPWSWLSVSMAQ). Cysteines 104 and 130 form a disulfide. Residues 145–163 (WMMLGFAIYGVIWLLMLLP) form a helical membrane-spanning segment. Residues 164–169 (ALKSAK) are Cytoplasmic-facing.

It belongs to the DsbB family.

Its subcellular location is the cell inner membrane. Its function is as follows. Required for disulfide bond formation in some periplasmic proteins. Acts by oxidizing the DsbA protein. The polypeptide is Disulfide bond formation protein B (Shewanella frigidimarina (strain NCIMB 400)).